Consider the following 460-residue polypeptide: Elongation factor 1-alpha (460 aa).

Gly2 carries the n,N,N-trimethylglycine modification. Residue Lys3 is modified to N6,N6-dimethyllysine; alternate. An N6-methyllysine; alternate modification is found at Lys3. Positions 6-241 constitute a tr-type G domain; it reads KAHINVVVIG…DAIEQPKRPT (236 aa). Residues 15–22 form a G1 region; sequence GHVDSGKS. Residue 15-22 coordinates GTP; that stretch reads GHVDSGKS. Lys31 is subject to N6-methyllysine. Positions 71 to 75 are G2; that stretch reads GITID. Lys80 carries the post-translational modification N6,N6,N6-trimethyllysine. Residues 92-95 form a G3 region; it reads DAPG. Residues 92–96 and 154–157 each bind GTP; these read DAPGH and NKMD. The G4 stretch occupies residues 154 to 157; that stretch reads NKMD. A G5 region spans residues 193 to 195; the sequence is SGF. Lys317 is subject to N6,N6-dimethyllysine; alternate. Residue Lys317 is modified to N6-methyllysine; alternate. At Lys391 the chain carries N6-methyllysine.

It belongs to the TRAFAC class translation factor GTPase superfamily. Classic translation factor GTPase family. EF-Tu/EF-1A subfamily.

Its subcellular location is the cytoplasm. In terms of biological role, this protein promotes the GTP-dependent binding of aminoacyl-tRNA to the A-site of ribosomes during protein biosynthesis. The polypeptide is Elongation factor 1-alpha (TEF) (Sordaria macrospora).